The sequence spans 1005 residues: Negative regulator of pleiotropic drug resistance STB5 (1005 aa).

The disordered stretch occupies residues 1–28; the sequence is MSGPDKGSDSGQTANDPKQKKARNGQME. The zn(2)-C6 fungal-type DNA-binding region spans 32 to 59; it reads CARCRKLKKKCPRQLPECSNCLKAREPC. 3 disordered regions span residues 129–151, 666–693, and 763–831; these read GGEQ…SINR, KGKS…EDVK, and TKPT…SSLR. Residues 673-693 show a composition bias toward basic and acidic residues; the sequence is KRFEKSKESDSDRGVTEEDVK. The span at 763–773 shows a compositional bias: polar residues; it reads TKPTANIMNDQ. Residues 792–801 show a composition bias toward basic and acidic residues; that stretch reads EGPKSLKEGN.

The protein localises to the nucleus. Its function is as follows. Transcription factor that negatively regulates pleiotropic drug resistance genes, including the ABC transporter genes CDR1, PDH1, and YOR1. This is Negative regulator of pleiotropic drug resistance STB5 from Candida glabrata (strain ATCC 2001 / BCRC 20586 / JCM 3761 / NBRC 0622 / NRRL Y-65 / CBS 138) (Yeast).